Reading from the N-terminus, the 416-residue chain is MAASMCDVFSFCVGVADRARGSVEVRYVDSIKGKGLFATQLIRKGETIFIERPLVAAQFLWNALYQYRACDHCLRALEKAEENAQRLTGKPSQILPHPELCSVRKDLHQNCPHCQVMYCSAECRLAAAEQYHQILCPGPSHDPRHPLNKLQEAWRSVHYPPETASIMLMARMVATVKQAKDKDHWVRLFNHFCSRTANQEQAIVHKLLKGKFKDQLELLLGLFKEALYEEALSLWFTPEGFRSLFALVGTNGQGIGTSSLSQWVHACDALELTPQDREQLDTFIDQLYKDIEAATGEFLNCEGSGLFVLQSCCNHSCVPNAETSFPENNFVLHVTALEDIKPGEEICISYLDCCQRERSRHSRHKILRENYLFNCSCPKCLAEADDPNVTSEEEEEEDEEEGEPEDAELGDEMTDV.

The SET domain maps to 21-351 (GSVEVRYVDS…PGEEICISYL (331 aa)). An MYND-type zinc finger spans residues 98–136 (PELCSVRKDLHQNCPHCQVMYCSAECRLAAAEQYHQILC). Y350 lines the S-adenosyl-L-methionine pocket. Positions 383 to 416 (EADDPNVTSEEEEEEDEEEGEPEDAELGDEMTDV) are disordered.

Belongs to the class V-like SAM-binding methyltransferase superfamily. As to quaternary structure, interacts with the N-CoR complex. Interacts with EHMT2 and CBX5. Post-translationally, ubiquitinated and degradaed by the proteasome in response to mild hypothermia (32 degrees Celsius), relieving repression of the SP1 gene.

The protein resides in the cytoplasm. The enzyme catalyses L-lysyl-[protein] + 3 S-adenosyl-L-methionine = N(6),N(6),N(6)-trimethyl-L-lysyl-[protein] + 3 S-adenosyl-L-homocysteine + 3 H(+). It catalyses the reaction L-lysyl(20)-[histone H4] + 3 S-adenosyl-L-methionine = N(6),N(6),N(6)-trimethyl-L-lysyl(20)-[histone H4] + 3 S-adenosyl-L-homocysteine + 3 H(+). The catalysed reaction is L-lysyl(36)-[histone H3] + 3 S-adenosyl-L-methionine = N(6),N(6),N(6)-trimethyl-L-lysyl(36)-[histone H3] + 3 S-adenosyl-L-homocysteine + 3 H(+). In terms of biological role, protein-lysine N-trimethyltransferase that specifically catalyzes trimethylation of 'Lys-22' of the RPL40/eL40 subunit of the 60S ribosome, thereby promoting translation elongation and protein synthesis. May also act as a histone methyltransferase in the context of histone octamers, but not on nucleosome substrates: trimethylates 'Lys-36' of histone H3 and 'Lys-20' of histone H4 to form H3K36me3 and H4K20me3, respectively. The histone methyltransferase activity, which is independent of its SET domain, is however unsure in vivo. In association with the NCoR corepressor complex, involved in the repression of toll-like receptor 4 (TLR4)-target inflammatory genes in macrophages, possibly by catalyzing the formation of H4K20me3 at the gene promoters. Plays an important role in embryonic stem (ES) cell self-renewal and differentiation. Maintains genome stability of ES cells during differentiation through regulation of heterochromatin formation and repression of endogenous repetitive DNA elements by promoting H4K20me3 marks. Acts as a regulator of the hypothermia response: its degradation in response to mild hypothermia relieves the formation of H3K36me3 at gene promoters, allowing expression of the neuroprotective gene SP1. This chain is Protein-lysine N-trimethyltransferase SMYD5, found in Mus musculus (Mouse).